The sequence spans 165 residues: Lymphocyte antigen 6K (165 aa).

A signal peptide spans 1 to 17 (MALLALLLVVALPRVWT). N-linked (GlcNAc...) asparagine glycosylation is present at N20. In terms of domain architecture, UPAR/Ly6 spans 47–141 (ERENTFECQN…VFKEYAGSMG (95 aa)). A lipid anchor (GPI-anchor amidated glycine) is attached at G138. Residues 139–165 (SMGESCGGLWLAILLLLASIAAGLSLS) constitute a propeptide, removed in mature form.

Interacts with TEX101. Specifically expressed in testis (at protein level).

The protein localises to the secreted. It is found in the cytoplasm. The protein resides in the cell membrane. Its subcellular location is the cytoplasmic vesicle. It localises to the secretory vesicle. The protein localises to the acrosome. It is found in the membrane raft. Its function is as follows. Required for sperm migration into the oviduct and male fertility by controlling binding of sperm to zona pellucida. May play a role in cell growth. This Homo sapiens (Human) protein is Lymphocyte antigen 6K.